The following is a 56-amino-acid chain: Large ribosomal subunit protein bL32 (56 aa).

The segment at 1–36 (MAVQQNKKSRSKRGMRRSHDALSTAQLSVDATSGEV) is disordered. A compositionally biased stretch (basic residues) spans 7–16 (KKSRSKRGMR). A compositionally biased stretch (polar residues) spans 21–31 (ALSTAQLSVDA).

It belongs to the bacterial ribosomal protein bL32 family.

This chain is Large ribosomal subunit protein bL32, found in Shewanella oneidensis (strain ATCC 700550 / JCM 31522 / CIP 106686 / LMG 19005 / NCIMB 14063 / MR-1).